The primary structure comprises 753 residues: 5-methyltetrahydropteroyltriglutamate--homocysteine methyltransferase (753 aa).

Residues 17–20 (RELK) and lysine 117 contribute to the 5-methyltetrahydropteroyltri-L-glutamate site. Residues 431-433 (IGS) and glutamate 484 contribute to the L-homocysteine site. L-methionine-binding positions include 431-433 (IGS) and glutamate 484. 5-methyltetrahydropteroyltri-L-glutamate contacts are provided by residues 515–516 (RC) and tryptophan 561. Aspartate 599 lines the L-homocysteine pocket. Aspartate 599 contributes to the L-methionine binding site. Residue glutamate 605 participates in 5-methyltetrahydropteroyltri-L-glutamate binding. Zn(2+) is bound by residues histidine 641, cysteine 643, and glutamate 665. Histidine 694 functions as the Proton donor in the catalytic mechanism. Cysteine 726 provides a ligand contact to Zn(2+).

The protein belongs to the vitamin-B12 independent methionine synthase family. The cofactor is Zn(2+).

It carries out the reaction 5-methyltetrahydropteroyltri-L-glutamate + L-homocysteine = tetrahydropteroyltri-L-glutamate + L-methionine. Its pathway is amino-acid biosynthesis; L-methionine biosynthesis via de novo pathway; L-methionine from L-homocysteine (MetE route): step 1/1. In terms of biological role, catalyzes the transfer of a methyl group from 5-methyltetrahydrofolate to homocysteine resulting in methionine formation. In Escherichia coli O8 (strain IAI1), this protein is 5-methyltetrahydropteroyltriglutamate--homocysteine methyltransferase.